The chain runs to 377 residues: UPF0425 pyridoxal phosphate-dependent protein MTH_1914 (377 aa).

At K207 the chain carries N6-(pyridoxal phosphate)lysine.

Belongs to the UPF0425 family. Pyridoxal 5'-phosphate is required as a cofactor.

The protein is UPF0425 pyridoxal phosphate-dependent protein MTH_1914 of Methanothermobacter thermautotrophicus (strain ATCC 29096 / DSM 1053 / JCM 10044 / NBRC 100330 / Delta H) (Methanobacterium thermoautotrophicum).